The sequence spans 211 residues: N-(5'-phosphoribosyl)anthranilate isomerase (211 aa).

Belongs to the TrpF family.

The catalysed reaction is N-(5-phospho-beta-D-ribosyl)anthranilate = 1-(2-carboxyphenylamino)-1-deoxy-D-ribulose 5-phosphate. Its pathway is amino-acid biosynthesis; L-tryptophan biosynthesis; L-tryptophan from chorismate: step 3/5. The polypeptide is N-(5'-phosphoribosyl)anthranilate isomerase (Desulfovibrio desulfuricans (strain ATCC 27774 / DSM 6949 / MB)).